Here is a 118-residue protein sequence, read N- to C-terminus: Down syndrome critical region protein 4 (118 aa).

The interval 1–39 is disordered; it reads MSLIILTRDDEPRIFTPDSDAASPALHSTSPLPDPASAS. Low complexity predominate over residues 28–39; the sequence is STSPLPDPASAS.

In terms of tissue distribution, mainly expressed in placenta.

The sequence is that of Down syndrome critical region protein 4 (DSCR4) from Homo sapiens (Human).